The sequence spans 467 residues: Mothers against decapentaplegic homolog 2 (467 aa).

An N-acetylserine modification is found at Ser2. Thr8 carries the post-translational modification Phosphothreonine; by MAPK3. In terms of domain architecture, MH1 spans 10-176 (PVVKRLLGWK…YQRVETPVLP (167 aa)). N6-acetyllysine is present on Lys19. Residues Cys74, Cys149, Cys161, and His166 each coordinate Zn(2+). Polar residues predominate over residues 207–217 (PAGIEPQSNYI). The disordered stretch occupies residues 207–251 (PAGIEPQSNYIPETPPPGYISEDGETSDQQLNQSMDTGSPAELSP). Thr220 is subject to Phosphothreonine. Positions 221 to 225 (PPPGY) match the PY-motif motif. Positions 233 to 243 (SDQQLNQSMDT) are enriched in polar residues. Position 240 is a phosphoserine; by CAMK2 (Ser240). Residues Ser245, Ser250, Ser255, Ser458, Ser460, and Ser464 each carry the phosphoserine modification. Residues 274 to 467 (WCSIAYYELN…SPSVRCSSMS (194 aa)) form the MH2 domain. Phosphoserine; by TGFBR1 occurs at positions 465 and 467.

It belongs to the dwarfin/SMAD family. In terms of assembly, monomer; in the absence of TGF-beta. Heterodimer; in the presence of TGF-beta. Forms a heterodimer with co-SMAD, SMAD4, in the nucleus to form the transactivation complex SMAD2/SMAD4. Found in a complex with SMAD3 and TRIM33 upon addition of TGF-beta. Identified in a complex that contains at least ZNF451, SMAD2, SMAD3 and SMAD4. Interacts (via the MH2 domain) with ZFYVE9; may form trimers with the SMAD4 co-SMAD. Interacts with TAZ/WWRT1. Interacts with FOXH1. Interacts with SNW1. Interacts with CREB-binding protein (CBP) and EP300. Interacts with SNON. Interacts with ALK4/ACVR1B. Interacts with SKOR1. Interacts with SKOR2. Interacts with PRDM16. Interacts (via MH2 domain) with LEMD3. Interacts with RBPMS. Interacts with WWP1. Interacts (dephosphorylated form, via the MH1 and MH2 domains) with RANBP3 (via its C-terminal R domain); the interaction results in the export of dephosphorylated SMAD3 out of the nucleus and termination of the TGF-beta signaling. Interacts with PDPK1 (via PH domain). Interacts with DAB2; the interactions are enhanced upon TGF-beta stimulation. Interacts with USP15. Interacts with PPP5C. Interacts with LDLRAD4 (via the SMAD interaction motif). Interacts (via MH2 domain) with PMEPA1 (via the SMAD interaction motif). Interacts with ZFHX3. Interacts with ZNF451. Interacts with SMURF2 when phosphorylated on Ser-465/467. Interacts with PPM1A. Interacts with TGF-beta. Interacts with TGFBR1. Interacts with TGIF. Interacts with SMAD3 and TRIM33. Interacts with ZNF580. Interacts with NEDD4L in response to TGF-beta. Interacts with HGS. Interacts with AIP1. Interacts with WWP1. Interacts with PML. Interacts weakly with ZNF8. Interacts (when phosphorylated) with RNF111; RNF111 acts as an enhancer of the transcriptional responses by mediating ubiquitination and degradation of SMAD2 inhibitors. Interacts with YAP1 (when phosphorylated at 'Ser-127'). Interacts when phosphorylated with IPO7; the interaction facilitates translocation of SMAD2 to the nucleus. Interacts with MTMR4; negatively regulates TGF-beta signaling through SMAD2 dephosphorylation and retention in endosomes. Post-translationally, phosphorylated on one or several of Thr-220, Ser-245, Ser-250, and Ser-255. In response to TGF-beta, phosphorylated on Ser-465/467 by TGF-beta and activin type 1 receptor kinases. TGF-beta-induced Ser-465/467 phosphorylation declines progressively in a KMT5A-dependent manner. Able to interact with SMURF2 when phosphorylated on Ser-465/467, recruiting other proteins, such as SNON, for degradation. In response to decorin, the naturally occurring inhibitor of TGF-beta signaling, phosphorylated on Ser-240 by CaMK2. Phosphorylated by MAPK3 upon EGF stimulation; which increases transcriptional activity and stability, and is blocked by calmodulin. Phosphorylated by PDPK1. In response to TGF-beta, ubiquitinated by NEDD4L; which promotes its degradation. Monoubiquitinated, leading to prevent DNA-binding. Deubiquitination by USP15 alleviates inhibition and promotes activation of TGF-beta target genes. Ubiquitinated by RNF111, leading to its degradation: only SMAD2 proteins that are 'in use' are targeted by RNF111, RNF111 playing a key role in activating SMAD2 and regulating its turnover. In terms of processing, acetylated on Lys-19 by coactivators in response to TGF-beta signaling, which increases transcriptional activity. Isoform short: Acetylation increases DNA binding activity in vitro and enhances its association with target promoters in vivo. Acetylation in the nucleus by EP300 is enhanced by TGF-beta. In terms of tissue distribution, expressed at high levels in skeletal muscle, endothelial cells, heart and placenta.

The protein resides in the cytoplasm. It localises to the nucleus. Functionally, receptor-regulated SMAD (R-SMAD) that is an intracellular signal transducer and transcriptional modulator activated by TGF-beta (transforming growth factor) and activin type 1 receptor kinases. Binds the TRE element in the promoter region of many genes that are regulated by TGF-beta and, on formation of the SMAD2/SMAD4 complex, activates transcription. Promotes TGFB1-mediated transcription of odontoblastic differentiation genes in dental papilla cells. Positively regulates PDPK1 kinase activity by stimulating its dissociation from the 14-3-3 protein YWHAQ which acts as a negative regulator. May act as a tumor suppressor in colorectal carcinoma. The protein is Mothers against decapentaplegic homolog 2 (SMAD2) of Homo sapiens (Human).